The chain runs to 343 residues: Aspartate carbamoyltransferase catalytic subunit (343 aa).

Carbamoyl phosphate contacts are provided by Arg-91 and Thr-92. Lys-119 contacts L-aspartate. Carbamoyl phosphate-binding residues include Arg-141, His-171, and Gln-174. Residues Arg-204 and Arg-259 each coordinate L-aspartate. The carbamoyl phosphate site is built by Gly-300 and Pro-301.

The protein belongs to the aspartate/ornithine carbamoyltransferase superfamily. ATCase family. As to quaternary structure, heterododecamer (2C3:3R2) of six catalytic PyrB chains organized as two trimers (C3), and six regulatory PyrI chains organized as three dimers (R2).

It carries out the reaction carbamoyl phosphate + L-aspartate = N-carbamoyl-L-aspartate + phosphate + H(+). It participates in pyrimidine metabolism; UMP biosynthesis via de novo pathway; (S)-dihydroorotate from bicarbonate: step 2/3. Catalyzes the condensation of carbamoyl phosphate and aspartate to form carbamoyl aspartate and inorganic phosphate, the committed step in the de novo pyrimidine nucleotide biosynthesis pathway. The chain is Aspartate carbamoyltransferase catalytic subunit from Burkholderia thailandensis (strain ATCC 700388 / DSM 13276 / CCUG 48851 / CIP 106301 / E264).